The following is a 600-amino-acid chain: NADH-quinone oxidoreductase subunit C/D (600 aa).

Residues 1-190 (MIDLMPKKNT…EPFFLNEQKE (190 aa)) form an NADH dehydrogenase I subunit C region. Positions 214–600 (EFMFLNLGPN…IDFVMSDVDR (387 aa)) are NADH dehydrogenase I subunit D.

In the N-terminal section; belongs to the complex I 30 kDa subunit family. This sequence in the C-terminal section; belongs to the complex I 49 kDa subunit family. As to quaternary structure, NDH-1 is composed of 13 different subunits. Subunits NuoB, CD, E, F, and G constitute the peripheral sector of the complex.

It localises to the cell membrane. It carries out the reaction a quinone + NADH + 5 H(+)(in) = a quinol + NAD(+) + 4 H(+)(out). In terms of biological role, NDH-1 shuttles electrons from NADH, via FMN and iron-sulfur (Fe-S) centers, to quinones in the respiratory chain. The immediate electron acceptor for the enzyme in this species is believed to be ubiquinone. Couples the redox reaction to proton translocation (for every two electrons transferred, four hydrogen ions are translocated across the cytoplasmic membrane), and thus conserves the redox energy in a proton gradient. This chain is NADH-quinone oxidoreductase subunit C/D, found in Buchnera aphidicola subsp. Acyrthosiphon pisum (strain 5A).